The following is a 484-amino-acid chain: ATP synthase subunit beta (484 aa).

168–175 (GGAGVGKT) lines the ATP pocket.

Belongs to the ATPase alpha/beta chains family. In terms of assembly, F-type ATPases have 2 components, CF(1) - the catalytic core - and CF(0) - the membrane proton channel. CF(1) has five subunits: alpha(3), beta(3), gamma(1), delta(1), epsilon(1). CF(0) has three main subunits: a(1), b(2) and c(9-12). The alpha and beta chains form an alternating ring which encloses part of the gamma chain. CF(1) is attached to CF(0) by a central stalk formed by the gamma and epsilon chains, while a peripheral stalk is formed by the delta and b chains.

The protein localises to the cell membrane. The catalysed reaction is ATP + H2O + 4 H(+)(in) = ADP + phosphate + 5 H(+)(out). Its function is as follows. Produces ATP from ADP in the presence of a proton gradient across the membrane. The catalytic sites are hosted primarily by the beta subunits. The protein is ATP synthase subunit beta of Renibacterium salmoninarum (strain ATCC 33209 / DSM 20767 / JCM 11484 / NBRC 15589 / NCIMB 2235).